The following is a 606-amino-acid chain: Maternal effect protein oskar (606 aa).

The HTH OST-type domain maps to 152 to 221 (EYPDIDSEVR…SGKRIFNLKA (70 aa)). Residues serine 270 and serine 275 each carry the phosphoserine modification. The leucine-zipper stretch occupies residues 425-439 (LMGDDFMLYLARMEL).

In terms of assembly, interacts with smaug (smg). Interacts with yl/yolkless. In terms of tissue distribution, begins to accumulate at the posterior pole of the oocyte from stage 8 onwards.

It localises to the endosome. Functionally, organizes the germ plasm and directs localization of the posterior determinant nanos. Oskar protein is required to keep nanos (nos) RNA and staufen protein at the posterior pole. This chain is Maternal effect protein oskar (osk), found in Drosophila melanogaster (Fruit fly).